Consider the following 450-residue polypeptide: Plasminogen-binding protein PgbA (450 aa).

Basic and acidic residues-rich tracts occupy residues 262 to 273 (EIKQEAIKEPKK), 284 to 310 (LEEK…DERK), and 317 to 362 (KAME…REIN). Positions 262-450 (EIKQEAIKEP…RRKALEMNKK (189 aa)) are disordered. Residues 363–386 (QESANEPSSENNATLKDTENTSVL) are compositionally biased toward polar residues. Residues 389-450 (SAAKKEAPKP…RRKALEMNKK (62 aa)) are compositionally biased toward basic and acidic residues.

It is found in the cell surface. In terms of biological role, binds plasminogen, specifically, and in a concentration and lysine-dependent manner. Plasminogen is the precursor of plasmin, a serine protease that cleaves fibrin, fibronectin, laminin and vitronectin. Acquisition of plasminogen/plasmin could enable H.pylori to degrade host components. This chain is Plasminogen-binding protein PgbA (pgbA), found in Helicobacter pylori (strain J99 / ATCC 700824) (Campylobacter pylori J99).